Consider the following 2130-residue polypeptide: Dedicator of cytokinesis protein 7 (2130 aa).

Phosphoserine is present on serine 30. The interval 137–175 (GFNPNTLDKQKERQKGLPRQVFESDEAPDGSSYQDEQDD) is disordered. Residues serine 180 and serine 182 each carry the phosphoserine modification. Residues 365–395 (FKEADATKNKEKLEKLKSQADQFCQRLGKYR) are a coiled coil. Lysine 381 is modified (N6-methyllysine). Threonine 450 carries the phosphothreonine modification. Residue serine 452 is modified to Phosphoserine. The 167-residue stretch at 561 to 727 (RNLLYIYPQS…GVFNVEVVAV (167 aa)) folds into the C2 DOCK-type domain. Serine 862, serine 864, serine 882, serine 888, serine 896, serine 900, and serine 905 each carry phosphoserine. The segment covering 888 to 901 (SLNLNRSRSLSNSN) has biased composition (low complexity). The disordered stretch occupies residues 888-966 (SLNLNRSRSL…SCNRMSSHTE (79 aa)). Residues threonine 907 and threonine 909 each carry the phosphothreonine modification. 8 positions are modified to phosphoserine: serine 910, serine 929, serine 963, serine 1382, serine 1420, serine 1422, serine 1424, and serine 1428. The span at 942–966 (SNPSPSAESTQAMDRSCNRMSSHTE) shows a compositional bias: polar residues. The 437-residue stretch at 1668–2104 (KGYQTSPDLR…LQPLINRKIP (437 aa)) folds into the DOCKER domain. Lysine 1952 carries the N6-acetyllysine modification. A coiled-coil region spans residues 2076–2102 (DQKEYQRELERNYHRLKEALQPLINRK). Residue serine 2119 is modified to Phosphoserine.

Belongs to the DOCK family. As to quaternary structure, component of the DOCK7-induced septin displacement/DISP complex, at least composed of DOCK7, LRCH3 and MYO6. Interacts with TSC1. Interacts with nucleotide-free RAC1 and RAC3. Interacts with TACC3. Interacts with CRY1. Interacts with NOD2.

The protein resides in the cell projection. Its subcellular location is the axon. Functionally, functions as a guanine nucleotide exchange factor (GEF), which activates Rac1 and Rac3 Rho small GTPases by exchanging bound GDP for free GTP. Does not have a GEF activity for CDC42. Required for STMN1 'Ser-15' phosphorylation during axon formation and consequently for neuronal polarization. As part of the DISP complex, may regulate the association of septins with actin and thereby regulate the actin cytoskeleton. Has a role in pigmentation. Involved in the regulation of cortical neurogenesis through the control of radial glial cells (RGCs) proliferation versus differentiation; negatively regulates the basal-to-apical interkinetic nuclear migration of RGCs by antagonizing the microtubule growth-promoting function of TACC3. This Mus musculus (Mouse) protein is Dedicator of cytokinesis protein 7 (Dock7).